A 687-amino-acid chain; its full sequence is DNA-directed RNA polymerase subunit beta' (687 aa).

4 residues coordinate Zn(2+): C69, C71, C87, and C90. Residues D492, D494, and D496 each coordinate Mg(2+).

It belongs to the RNA polymerase beta' chain family. RpoC1 subfamily. In terms of assembly, in plastids the minimal PEP RNA polymerase catalytic core is composed of four subunits: alpha, beta, beta', and beta''. When a (nuclear-encoded) sigma factor is associated with the core the holoenzyme is formed, which can initiate transcription. Mg(2+) serves as cofactor. It depends on Zn(2+) as a cofactor.

The protein resides in the plastid. It is found in the chloroplast. The enzyme catalyses RNA(n) + a ribonucleoside 5'-triphosphate = RNA(n+1) + diphosphate. Its function is as follows. DNA-dependent RNA polymerase catalyzes the transcription of DNA into RNA using the four ribonucleoside triphosphates as substrates. This is DNA-directed RNA polymerase subunit beta' from Silene latifolia (White campion).